The following is a 378-amino-acid chain: Erythronate-4-phosphate dehydrogenase (378 aa).

Substrate contacts are provided by Ser-45 and Thr-66. The NAD(+) site is built by Asp-146 and Thr-175. Arg-208 is an active-site residue. An NAD(+)-binding site is contributed by Asp-232. Glu-237 is a catalytic residue. The active-site Proton donor is the His-254. Gly-257 is a binding site for NAD(+). Position 258 (Tyr-258) interacts with substrate.

This sequence belongs to the D-isomer specific 2-hydroxyacid dehydrogenase family. PdxB subfamily. Homodimer.

Its subcellular location is the cytoplasm. The enzyme catalyses 4-phospho-D-erythronate + NAD(+) = (R)-3-hydroxy-2-oxo-4-phosphooxybutanoate + NADH + H(+). It functions in the pathway cofactor biosynthesis; pyridoxine 5'-phosphate biosynthesis; pyridoxine 5'-phosphate from D-erythrose 4-phosphate: step 2/5. Catalyzes the oxidation of erythronate-4-phosphate to 3-hydroxy-2-oxo-4-phosphonooxybutanoate. In Shigella flexneri serotype 5b (strain 8401), this protein is Erythronate-4-phosphate dehydrogenase.